The sequence spans 454 residues: MNDYKMTPGERRATWGLGTVFSLRMLGMFMVLPVLTTYGMALQGASEALIGIAIGIYGLTQAVFQIPFGLLSDRIGRKPLIVGGLAVFAAGSVIAALSDSIWGIILGRALQGSGAIAAAVMALLSDLTREQNRTKAMAFIGVSFGITFAIAMVLGPIITHKLGLHALFWMIAILATTGIALTIWVVPNSSTHVLNRESGMVKGSFSKVLAEPRLLKLNFGIMCLHILLMSTFVALPGQLADAGFPAAEHWKVYLATMLIAFGSVVPFIIYAEVKRKMKQVFVFCVGLIVVAEIVLWNAQTQFWQLVVGVQLFFVAFNLMEALLPSLISKESPAGYKGTAMGVYSTSQFLGVAIGGSLGGWINGMFDGQGVFLAGAMLAAVWLTVASTMKEPPYVSSLRIEIPANIAANEALKVRLLETEGIKEVLIAEEEHSAYVKIDSKVTNRFEIEQAIRQA.

Residues 1–14 (MNDYKMTPGERRAT) are Periplasmic-facing. A helical transmembrane segment spans residues 15-35 (WGLGTVFSLRMLGMFMVLPVL). Over 36–47 (TTYGMALQGASE) the chain is Cytoplasmic. The chain crosses the membrane as a helical span at residues 48-68 (ALIGIAIGIYGLTQAVFQIPF). The Periplasmic portion of the chain corresponds to 69–84 (GLLSDRIGRKPLIVGG). A helical membrane pass occupies residues 85–105 (LAVFAAGSVIAALSDSIWGII). Residues 106–137 (LGRALQGSGAIAAAVMALLSDLTREQNRTKAM) lie on the Cytoplasmic side of the membrane. Residues 138–158 (AFIGVSFGITFAIAMVLGPII) traverse the membrane as a helical segment. Residues 159 to 165 (THKLGLH) are Periplasmic-facing. The chain crosses the membrane as a helical span at residues 166-186 (ALFWMIAILATTGIALTIWVV). Residues 187–216 (PNSSTHVLNRESGMVKGSFSKVLAEPRLLK) lie on the Cytoplasmic side of the membrane. A helical transmembrane segment spans residues 217–237 (LNFGIMCLHILLMSTFVALPG). Residues 238–252 (QLADAGFPAAEHWKV) lie on the Periplasmic side of the membrane. The chain crosses the membrane as a helical span at residues 253-273 (YLATMLIAFGSVVPFIIYAEV). Topologically, residues 274 to 279 (KRKMKQ) are cytoplasmic. The chain crosses the membrane as a helical span at residues 280–300 (VFVFCVGLIVVAEIVLWNAQT). The Periplasmic portion of the chain corresponds to 301–306 (QFWQLV). Residues 307–327 (VGVQLFFVAFNLMEALLPSLI) form a helical membrane-spanning segment. The Cytoplasmic portion of the chain corresponds to 328–340 (SKESPAGYKGTAM). Residues 341–361 (GVYSTSQFLGVAIGGSLGGWI) form a helical membrane-spanning segment. At 362–363 (NG) the chain is on the periplasmic side. The helical transmembrane segment at 364 to 384 (MFDGQGVFLAGAMLAAVWLTV) threads the bilayer. Over 385–454 (ASTMKEPPYV…FEIEQAIRQA (70 aa)) the chain is Cytoplasmic.

The protein belongs to the major facilitator superfamily.

It is found in the cell inner membrane. This Escherichia coli (strain K12) protein is Inner membrane transport protein YajR (yajR).